The sequence spans 87 residues: Colicin-E7 immunity protein (87 aa).

Belongs to the colicins ColE2/ColE8/ColE9 and pyocins S1/S2 family.

This protein is able to protect a cell, which harbors the plasmid ColE7 encoding colicin E7, against colicin E7, it binds specifically to the DNase-type colicin and inhibits its bactericidal activity. Dimeric ImmE7 may possess a RNase activity that cleaves its own mRNA at a specific site and thus autoregulates translational expression of the downstream ceiE7 gene as well as degradation of the upstream ceaE7 mRNA. The polypeptide is Colicin-E7 immunity protein (imm) (Escherichia coli).